Reading from the N-terminus, the 339-residue chain is MEFDYLHLYVDDYQSAHRCYQRQWGFTCVNKIITDQGITGIYQQGQILLLISASESSLSRYADYLQKHPPGVGEVAWQVANWQKIQHQLSELQIETTPVIHPLTKAEGLTFLLWGDVHHSIYPVRSELNQNKTLHGVGLTTIDHVVLNIAADQFTQASQWYQQVFGWSVQQSFTVNTPHSGLYSEALASANGKVQFNLNCPTNNSSQIQTFLANNHGAGIQHVAFSTTSITRTVAHLRERGVNFLKIPTGYYQQQRNSSYFNYASLDWDTLQCLEILLDDQDNTGERLLLQIFSQPCYGVGTLFWEIIERRHRAKGFGQGNFQALYEAVETLEKQLEVP.

VOC domains lie at 2–127 and 141–276; these read EFDY…VRSE and TIDH…CLEI. Fe cation is bound by residues H144, H222, and E306.

Belongs to the 4HPPD family. Fe cation is required as a cofactor.

This is an uncharacterized protein from Synechocystis sp. (strain ATCC 27184 / PCC 6803 / Kazusa).